We begin with the raw amino-acid sequence, 111 residues long: MSFHVTAEDARIEVRDNRTILFARLRREDGEWNDASYELDQIIGNNDGHFQWGGQNFTETAEDIRFHPKEGAAEQPILRARLRDCNGEFHDRDVNLTEIVENVNGEFQAKF.

Belongs to the cyanovirin-N family.

Mannose-binding lectin. This is Cyanovirin-N homolog from Neurospora crassa (strain ATCC 24698 / 74-OR23-1A / CBS 708.71 / DSM 1257 / FGSC 987).